The following is a 451-amino-acid chain: MKKIIPTNLFKLISILFILTPFFAWSAPQETLIDRVVAVVNDNIILKSELDAEVNLAKQDLQARNIPVTNPEELASKVLDKIILERLQLQRINQLGIKIADDELFSQIQEIAKQNNLTVIELRDRLNMSQKNGFESFRERIRQQMLFQKLREVEVLSKTQVTEDEVSNFIQRQALVQSDVEYHLGHIMVSLPESATPDQRDASKQKAQEILQKIRTGGDFSQMAVRYSEGSKALQGGDLGWLGIDQIPTFFNDALNQLEIGETSDVIRSPVGFHIIQLQGKRNKNSQIVKQYHLYRFILLSEDAQNKQQPSPTLVKLAESLNSLESFKQLNEKYSDIPASVNANGNLGWQTAKEMSPEYYQAIEALQPGHAAKPFATEKGWVILFLDGIRDQDLSLKDKRKQAMQTLRMKKANESYEIWLRRLKDEALIDIRLEDPEIMKKQPSHEEANAN.

The N-terminal stretch at 1-26 (MKKIIPTNLFKLISILFILTPFFAWS) is a signal peptide. PpiC domains follow at residues 179 to 280 (DVEY…QLQG) and 290 to 388 (KQYH…FLDG).

It is found in the periplasm. It catalyses the reaction [protein]-peptidylproline (omega=180) = [protein]-peptidylproline (omega=0). Functionally, chaperone involved in the correct folding and assembly of outer membrane proteins. Recognizes specific patterns of aromatic residues and the orientation of their side chains, which are found more frequently in integral outer membrane proteins. May act in both early periplasmic and late outer membrane-associated steps of protein maturation. This is Chaperone SurA from Hydrogenovibrio crunogenus (strain DSM 25203 / XCL-2) (Thiomicrospira crunogena).